The sequence spans 548 residues: Membrane protein insertase YidC (548 aa).

The chain crosses the membrane as a helical span at residues 6–26 (NLLVIALLFVSFMIWQAWEQD). Residues 28 to 58 (NPQPQQQQTTQTTTTAAGSAADQGVPASGQG) form a disordered region. The span at 29-42 (PQPQQQQTTQTTTT) shows a compositional bias: low complexity. The next 4 helical transmembrane spans lie at 350–370 (FLGN…GIMY), 420–440 (LGGC…YYML), 458–478 (LSAQ…MFFI), and 499–519 (PVIF…YYIV).

It belongs to the OXA1/ALB3/YidC family. Type 1 subfamily. Interacts with the Sec translocase complex via SecD. Specifically interacts with transmembrane segments of nascent integral membrane proteins during membrane integration.

It localises to the cell inner membrane. Required for the insertion and/or proper folding and/or complex formation of integral membrane proteins into the membrane. Involved in integration of membrane proteins that insert both dependently and independently of the Sec translocase complex, as well as at least some lipoproteins. Aids folding of multispanning membrane proteins. The protein is Membrane protein insertase YidC of Enterobacter sp. (strain 638).